A 232-amino-acid polypeptide reads, in one-letter code: Phosphoglycolate phosphatase (232 aa).

The active-site Nucleophile is aspartate 13. Mg(2+)-binding residues include aspartate 13, aspartate 15, and aspartate 175.

This sequence belongs to the HAD-like hydrolase superfamily. CbbY/CbbZ/Gph/YieH family. Monomer. Mg(2+) serves as cofactor. It depends on chloride as a cofactor.

The catalysed reaction is 2-phosphoglycolate + H2O = glycolate + phosphate. It participates in organic acid metabolism; glycolate biosynthesis; glycolate from 2-phosphoglycolate: step 1/1. Specifically catalyzes the dephosphorylation of 2-phosphoglycolate. Is involved in the dissimilation of the intracellular 2-phosphoglycolate formed during the DNA repair of 3'-phosphoglycolate ends, a major class of DNA lesions induced by oxidative stress. The chain is Phosphoglycolate phosphatase from Yersinia pseudotuberculosis serotype I (strain IP32953).